Consider the following 163-residue polypeptide: Peptidyl-prolyl cis-trans isomerase-like 1 (163 aa).

Positions 1 to 155 constitute a PPIase cyclophilin-type domain; it reads MATDVAVETT…TEVKIVKARV (155 aa).

This sequence belongs to the cyclophilin-type PPIase family. PPIL1 subfamily.

It catalyses the reaction [protein]-peptidylproline (omega=180) = [protein]-peptidylproline (omega=0). Functionally, PPIases accelerate the folding of proteins. It catalyzes the cis-trans isomerization of proline imidic peptide bonds in oligopeptides. This Neurospora crassa (strain ATCC 24698 / 74-OR23-1A / CBS 708.71 / DSM 1257 / FGSC 987) protein is Peptidyl-prolyl cis-trans isomerase-like 1 (ppi-1).